Reading from the N-terminus, the 301-residue chain is Phosducin-like protein (301 aa).

Position 2 is an N-acetylthreonine (T2). The segment at 18-57 (SSSEDEDSDHEDKDRGRCAPASSSVPAEAELAGEGISVNT) is disordered. Phosphoserine is present on residues S20 and S25. The segment covering 36–49 (APASSSVPAEAELA) has biased composition (low complexity). Residues 36 to 299 (APASSSVPAE…TCHSEDSDLE (264 aa)) enclose the Phosducin domain. S226, S293, and S296 each carry phosphoserine.

Belongs to the phosducin family. As to quaternary structure, forms a complex with the beta and gamma subunits of the GTP-binding protein, transducin. Interacts with the CCT chaperonin complex.

The protein resides in the cell projection. The protein localises to the cilium. Functionally, acts as a positive regulator of hedgehog signaling and regulates ciliary function. Its function is as follows. Functions as a co-chaperone for CCT in the assembly of heterotrimeric G protein complexes, facilitates the assembly of both Gbeta-Ggamma and RGS-Gbeta5 heterodimers. Acts as a negative regulator of heterotrimeric G proteins assembly by trapping the preloaded G beta subunits inside the CCT chaperonin. The chain is Phosducin-like protein (PDCL) from Homo sapiens (Human).